Consider the following 192-residue polypeptide: UPF0312 protein PputW619_0484 (192 aa).

The first 23 residues, 1 to 23, serve as a signal peptide directing secretion; the sequence is MLKKTFAALALGTALLSAGQAMA.

It belongs to the UPF0312 family. Type 1 subfamily.

The protein resides in the periplasm. The chain is UPF0312 protein PputW619_0484 from Pseudomonas putida (strain W619).